A 527-amino-acid polypeptide reads, in one-letter code: Glucose-6-phosphate isomerase (527 aa).

The Proton donor role is filled by Glu-323. Catalysis depends on residues His-352 and Lys-454.

The protein belongs to the GPI family.

It localises to the cytoplasm. It carries out the reaction alpha-D-glucose 6-phosphate = beta-D-fructose 6-phosphate. It functions in the pathway carbohydrate biosynthesis; gluconeogenesis. It participates in carbohydrate degradation; glycolysis; D-glyceraldehyde 3-phosphate and glycerone phosphate from D-glucose: step 2/4. Functionally, catalyzes the reversible isomerization of glucose-6-phosphate to fructose-6-phosphate. The chain is Glucose-6-phosphate isomerase from Prochlorococcus marinus (strain MIT 9215).